The sequence spans 4965 residues: Auxin transport protein BIG (4965 aa).

Transmembrane regions (helical) follow at residues 289–309 (SDIC…IFSP), 646–666 (ACLA…AYEV), and 772–792 (LFLI…YEGL). Positions 1383 to 1425 (TNQESNSTVDCDASSGEEDEDDGTSDGELVSIDRDEEEDGNSE) are disordered. Acidic residues predominate over residues 1397 to 1407 (SGEEDEDDGTS). The segment at 1431 to 1502 (KVCTFTSSGS…RGSSCQCLKP (72 aa)) adopts a UBR-type zinc-finger fold. Positions 2437 to 2456 (DDAPDNHAKASAASNSTTGN) are disordered. Low complexity predominate over residues 2445 to 2456 (KASAASNSTTGN). Residues 2469 to 2528 (SVQYCCDGCSTVPILRRRWHCNICPDFDLCETCYEILDADRLPAPHSRDHPMSAIPIELD) form a ZZ-type zinc finger. Zn(2+) contacts are provided by Cys2474, Cys2477, Cys2489, Cys2492, Cys2498, Cys2501, His2514, and His2518. The segment at 2997 to 3037 (NAQKTESGDIGSSTRTGSQSSDSKKKRKGDDSSEGSSEKSC) is disordered. Low complexity predominate over residues 3007–3017 (GSSTRTGSQSS). Residues 3024–3037 (KGDDSSEGSSEKSC) show a composition bias toward basic and acidic residues. The segment at 3319-3359 (CPRCSRSVTDKHGICSNCHENAYQCRQCRNINYENLDSFLC) adopts an MYND-type; degenerate zinc-finger fold. The tract at residues 3672 to 3721 (PKSDSGEKEPGMGKSSLMQAKNDDTVGHSVTNLSTSKTQSELSGKIPDGS) is disordered. A compositionally biased stretch (polar residues) spans 3699–3713 (HSVTNLSTSKTQSEL). Residues 4433 to 4963 (PSIPLILSML…DFVRAIIHGA (531 aa)) are UBR4 E3 catalytic module. A HemiRING-type zinc finger spans residues 4562–4681 (GLACMVCREG…WDQLNSLGRA (120 aa)). The Zn(2+) site is built by Cys4565, Cys4568, His4615, and Cys4618. The region spanning 4684–4963 (SRLRLLTYDI…DFVRAIIHGA (280 aa)) is the UZI domain. Positions 4753-4770 (SSSPSTPESPVRLSALSG) are enriched in low complexity. Disordered regions lie at residues 4753–4778 (SSSP…SGSS) and 4822–4846 (STLK…ADSN). The segment covering 4824 to 4845 (LKLSADTSSSAVRSDEGSSADS) has biased composition (polar residues).

Belongs to the UBR4 family.

The protein resides in the membrane. Required for auxin efflux and polar auxin transport (PAT) influencing auxin-mediated developmental responses (e.g. cell elongation, apical dominance, lateral root production, inflorescence architecture, general growth and development). The polypeptide is Auxin transport protein BIG (Oryza sativa subsp. japonica (Rice)).